We begin with the raw amino-acid sequence, 39 residues long: Glutenin, high molecular weight subunit PC237 (39 aa).

The protein belongs to the gliadin/glutenin family. In terms of assembly, disulfide-bridge linked aggregates.

Glutenins are high-molecular weight seed storage proteins of wheat endosperm. Thought to be responsible for the visco-elastic property of wheat dough. This chain is Glutenin, high molecular weight subunit PC237, found in Triticum aestivum (Wheat).